We begin with the raw amino-acid sequence, 72 residues long: UPF0346 protein GK1571 (72 aa).

This sequence belongs to the UPF0346 family.

The polypeptide is UPF0346 protein GK1571 (Geobacillus kaustophilus (strain HTA426)).